The sequence spans 249 residues: UPF0758 protein BMEI0718 (249 aa).

The tract at residues 1–34 (MAKKKDTPGDGEFPGFSDTLQRTPKLEKPHYAGH) is disordered. Residues 24–34 (PKLEKPHYAGH) are compositionally biased toward basic and acidic residues. An MPN domain is found at 127–249 (VLGSWDKVIN…HASLRSLRLI (123 aa)). Zn(2+) is bound by residues histidine 198, histidine 200, and aspartate 211. A JAMM motif motif is present at residues 198–211 (HNHPSGDPTPSRAD).

The protein belongs to the UPF0758 family.

This Brucella melitensis biotype 1 (strain ATCC 23456 / CCUG 17765 / NCTC 10094 / 16M) protein is UPF0758 protein BMEI0718.